A 251-amino-acid chain; its full sequence is Hydroxyacylglutathione hydrolase (251 aa).

Zn(2+)-binding residues include His-53, His-55, Asp-57, His-58, His-110, Asp-127, and His-165.

This sequence belongs to the metallo-beta-lactamase superfamily. Glyoxalase II family. Monomer. Zn(2+) is required as a cofactor.

The enzyme catalyses an S-(2-hydroxyacyl)glutathione + H2O = a 2-hydroxy carboxylate + glutathione + H(+). The protein operates within secondary metabolite metabolism; methylglyoxal degradation; (R)-lactate from methylglyoxal: step 2/2. Thiolesterase that catalyzes the hydrolysis of S-D-lactoyl-glutathione to form glutathione and D-lactic acid. This chain is Hydroxyacylglutathione hydrolase, found in Escherichia coli O6:H1 (strain CFT073 / ATCC 700928 / UPEC).